The sequence spans 412 residues: Peptidase T (412 aa).

Residue His84 participates in Zn(2+) binding. Asp86 is an active-site residue. Residue Asp146 participates in Zn(2+) binding. Glu179 functions as the Proton acceptor in the catalytic mechanism. Zn(2+) contacts are provided by Glu180, Asp202, and His385.

The protein belongs to the peptidase M20B family. Zn(2+) is required as a cofactor.

It localises to the cytoplasm. The enzyme catalyses Release of the N-terminal residue from a tripeptide.. Its function is as follows. Cleaves the N-terminal amino acid of tripeptides. The protein is Peptidase T of Haemophilus influenzae (strain ATCC 51907 / DSM 11121 / KW20 / Rd).